The chain runs to 93 residues: Integration host factor subunit beta (93 aa).

Belongs to the bacterial histone-like protein family. In terms of assembly, heterodimer of an alpha and a beta chain.

Functionally, this protein is one of the two subunits of integration host factor, a specific DNA-binding protein that functions in genetic recombination as well as in transcriptional and translational control. This chain is Integration host factor subunit beta, found in Aliivibrio salmonicida (strain LFI1238) (Vibrio salmonicida (strain LFI1238)).